Here is a 148-residue protein sequence, read N- to C-terminus: Lysozyme C (148 aa).

An N-terminal signal peptide occupies residues 1–18 (MKVLILLGLVLLSVMVQG). The C-type lysozyme domain maps to 19-148 (KVFERCELAR…VSQYIQGCGV (130 aa)). Intrachain disulfides connect C24–C146, C48–C134, C83–C99, and C95–C113. Residues E53 and D71 contribute to the active site.

Belongs to the glycosyl hydrolase 22 family. Monomer.

It localises to the secreted. The enzyme catalyses Hydrolysis of (1-&gt;4)-beta-linkages between N-acetylmuramic acid and N-acetyl-D-glucosamine residues in a peptidoglycan and between N-acetyl-D-glucosamine residues in chitodextrins.. Functionally, lysozymes have primarily a bacteriolytic function; those in tissues and body fluids are associated with the monocyte-macrophage system and enhance the activity of immunoagents. This is Lysozyme C (LYZ) from Saguinus oedipus (Cotton-top tamarin).